A 553-amino-acid polypeptide reads, in one-letter code: CTP synthase (553 aa).

Positions 1-277 (MPTEPETDYD…DQYVMEELDI (277 aa)) are amidoligase domain. Ser26 lines the CTP pocket. Residue Ser26 participates in UTP binding. ATP is bound by residues 27-32 (GLGKGI) and Asp84. Mg(2+) contacts are provided by Asp84 and Glu152. CTP is bound by residues 159-161 (DIE), 198-203 (KTKPTQ), and Lys234. UTP-binding positions include 198-203 (KTKPTQ) and Lys234. Val252 is a binding site for ATP. In terms of domain architecture, Glutamine amidotransferase type-1 spans 307 to 544 (LVGKYDLEDA…LEAVLGDDPH (238 aa)). Residue Gly364 coordinates L-glutamine. Catalysis depends on Cys391, which acts as the Nucleophile; for glutamine hydrolysis. L-glutamine contacts are provided by residues 392–395 (LGFQ), Glu415, and Arg472. Residues His517 and Glu519 contribute to the active site.

This sequence belongs to the CTP synthase family. As to quaternary structure, homotetramer.

The protein localises to the cytoplasm. It catalyses the reaction UTP + L-glutamine + ATP + H2O = CTP + L-glutamate + ADP + phosphate + 2 H(+). It carries out the reaction L-glutamine + H2O = L-glutamate + NH4(+). The enzyme catalyses UTP + NH4(+) + ATP = CTP + ADP + phosphate + 2 H(+). It functions in the pathway pyrimidine metabolism; CTP biosynthesis via de novo pathway; CTP from UDP: step 2/2. Its activity is regulated as follows. Allosterically activated by GTP, when glutamine is the substrate; GTP has no effect on the reaction when ammonia is the substrate. The allosteric effector GTP functions by stabilizing the protein conformation that binds the tetrahedral intermediate(s) formed during glutamine hydrolysis. Inhibited by the product CTP, via allosteric rather than competitive inhibition. Inhibited by 6-diazo-5-oxo-l-norleucine (DON). Catalyzes the ATP-dependent amination of UTP to CTP with either L-glutamine or ammonia as the source of nitrogen. Regulates intracellular CTP levels through interactions with the four ribonucleotide triphosphates. In Haloarcula hispanica (strain ATCC 33960 / DSM 4426 / JCM 8911 / NBRC 102182 / NCIMB 2187 / VKM B-1755), this protein is CTP synthase.